The sequence spans 96 residues: SAGA-associated factor 11 (96 aa).

The SGF11-type zinc finger occupies 68 to 89 (FHCKNCGRDVSANRFAAHLQRC).

This sequence belongs to the SGF11 family. In terms of assembly, component of the 1.8 MDa SAGA transcription coactivator-HAT complex. SAGA is built of 5 distinct domains with specialized functions. Within the SAGA complex, SUS1, SGF11, SGF73 and UBP8 form an additional subcomplex of SAGA called the DUB module (deubiquitination module). Interacts directly with SGF73, SUS1 and UBP8.

The protein resides in the nucleus. Its function is as follows. Functions as a component of the transcription regulatory histone acetylation (HAT) complex SAGA. At the promoters, SAGA is required for recruitment of the basal transcription machinery. It influences RNA polymerase II transcriptional activity through different activities such as TBP interaction and promoter selectivity, interaction with transcription activators, and chromatin modification through histone acetylation and deubiquitination. SAGA acetylates nucleosomal histone H3 to some extent (to form H3K9ac, H3K14ac, H3K18ac and H3K23ac). SAGA interacts with DNA via upstream activating sequences (UASs). Involved in transcriptional regulation of a subset of SAGA-regulated genes. Within the SAGA complex, participates in a subcomplex, that specifically deubiquitinates histones H2B. The chain is SAGA-associated factor 11 from Vanderwaltozyma polyspora (strain ATCC 22028 / DSM 70294 / BCRC 21397 / CBS 2163 / NBRC 10782 / NRRL Y-8283 / UCD 57-17) (Kluyveromyces polysporus).